Reading from the N-terminus, the 94-residue chain is DNA-directed RNA polymerase subunit omega (94 aa).

The protein belongs to the RNA polymerase subunit omega family. In terms of assembly, the RNAP catalytic core consists of 2 alpha, 1 beta, 1 beta' and 1 omega subunit. When a sigma factor is associated with the core the holoenzyme is formed, which can initiate transcription.

The enzyme catalyses RNA(n) + a ribonucleoside 5'-triphosphate = RNA(n+1) + diphosphate. Its function is as follows. Promotes RNA polymerase assembly. Latches the N- and C-terminal regions of the beta' subunit thereby facilitating its interaction with the beta and alpha subunits. The protein is DNA-directed RNA polymerase subunit omega of Photobacterium profundum (strain SS9).